Consider the following 519-residue polypeptide: Maturase K (519 aa).

The protein belongs to the intron maturase 2 family. MatK subfamily.

It localises to the plastid. Its subcellular location is the chloroplast. In terms of biological role, usually encoded in the trnK tRNA gene intron. Probably assists in splicing its own and other chloroplast group II introns. This chain is Maturase K, found in Aesculus pavia (Red buckeye).